A 350-amino-acid chain; its full sequence is Putative deoxyribonuclease-2 (350 aa).

It belongs to the DNase II family.

The chain is Putative deoxyribonuclease-2 from Burkholderia pseudomallei (strain 1710b).